A 328-amino-acid chain; its full sequence is Small ribosomal subunit protein bS1A (328 aa).

3 S1 motif domains span residues 31-100 (GDIV…LSIR), 118-182 (DATV…LSHR), and 196-264 (AQVV…LSTK). Positions 298–328 (EAQGIPYEPPTSVDDTDDEEDESLAVSAVDE) are disordered. Residues 311–328 (DDTDDEEDESLAVSAVDE) are compositionally biased toward acidic residues.

The protein belongs to the bacterial ribosomal protein bS1 family.

Its function is as follows. Binds mRNA. This is Small ribosomal subunit protein bS1A (rps1A) from Synechocystis sp. (strain ATCC 27184 / PCC 6803 / Kazusa).